The chain runs to 384 residues: F-box A protein 224 (384 aa).

The region spanning P71–K122 is the F-box domain.

The protein belongs to the FTH family.

The protein is F-box A protein 224 (fbxa-224) of Caenorhabditis elegans.